A 382-amino-acid polypeptide reads, in one-letter code: uncharacterized protein (382 aa).

12 consecutive transmembrane segments (helical) span residues 14 to 34 (GLLL…LWLA), 45 to 65 (VVSS…GYVI), 79 to 99 (FIFA…SWLA), 102 to 122 (FVAG…LMCS), 131 to 151 (LLAA…LLVS), 157 to 177 (LMSV…PLLF), 204 to 224 (LGVN…GLMP), 235 to 255 (ASIG…QWPI), 270 to 290 (VQVF…AMAP), 291 to 311 (ALFI…AWAC), 325 to 345 (ALLL…AMLM), and 348 to 368 (FSDN…LLML).

This sequence belongs to the major facilitator superfamily. YcaD (TC 2.A.1.26) family.

Its subcellular location is the cell inner membrane. This is an uncharacterized protein from Shigella sonnei (strain Ss046).